The primary structure comprises 198 residues: Nucleoid occlusion factor SlmA (198 aa).

Residues 11 to 71 (PNRKHQILES…GLIDFIEESI (61 aa)) form the HTH tetR-type domain. A DNA-binding region (H-T-H motif) is located at residues 34-53 (TTAKLAAEVGFSEAALYRHF).

Belongs to the nucleoid occlusion factor SlmA family. In terms of assembly, homodimer. Interacts with FtsZ.

It is found in the cytoplasm. The protein resides in the nucleoid. Required for nucleoid occlusion (NO) phenomenon, which prevents Z-ring formation and cell division over the nucleoid. Acts as a DNA-associated cell division inhibitor that binds simultaneously chromosomal DNA and FtsZ, and disrupts the assembly of FtsZ polymers. SlmA-DNA-binding sequences (SBS) are dispersed on non-Ter regions of the chromosome, preventing FtsZ polymerization at these regions. The polypeptide is Nucleoid occlusion factor SlmA (Colwellia psychrerythraea (strain 34H / ATCC BAA-681) (Vibrio psychroerythus)).